The primary structure comprises 86 residues: Small ribosomal subunit protein uS17 (86 aa).

This sequence belongs to the universal ribosomal protein uS17 family. As to quaternary structure, part of the 30S ribosomal subunit.

In terms of biological role, one of the primary rRNA binding proteins, it binds specifically to the 5'-end of 16S ribosomal RNA. The protein is Small ribosomal subunit protein uS17 of Lactococcus lactis subsp. cremoris (strain MG1363).